We begin with the raw amino-acid sequence, 500 residues long: NADH-quinone oxidoreductase subunit N (500 aa).

The next 14 membrane-spanning stretches (helical) occupy residues 13–33 (VMMPEFIILGVAVALSLIDLF), 42–62 (LLGLFAFVGIAVSFVSLLSLW), 79–99 (FAKSFKALLLIGSALVLLLSI), 111–131 (GEFYYLFLTALLGAMMMASSG), 133–153 (LITLFVGLELLSISSYILVAI), 168–188 (VITGSIATAITLFGMSYIFGF), 211–231 (YVLSLAFLLTFVGLSFKLASA), 245–265 (TTPVVSFLSVVSKTAGFVIVL), 281–301 (ASMLMTFAPYIAFLSGATMII), 321–341 (VAHAGYVLVAFASLSMFMFEA), 342–362 (IWFYLLAYVFMTIGAFAILQV), 386–406 (AIAMTIFLLSLAGIPGTAGFI), 424–444 (VLASIMVITTIISYVYYFGIF), and 461–481 (PPGVIAVVVICVIGTVLLGVF).

This sequence belongs to the complex I subunit 2 family. As to quaternary structure, NDH-1 is composed of 14 different subunits. Subunits NuoA, H, J, K, L, M, N constitute the membrane sector of the complex.

Its subcellular location is the cell membrane. It carries out the reaction a quinone + NADH + 5 H(+)(in) = a quinol + NAD(+) + 4 H(+)(out). Functionally, NDH-1 shuttles electrons from NADH, via FMN and iron-sulfur (Fe-S) centers, to quinones in the respiratory chain. The immediate electron acceptor for the enzyme in this species is believed to be a menaquinone. Couples the redox reaction to proton translocation (for every two electrons transferred, four hydrogen ions are translocated across the cytoplasmic membrane), and thus conserves the redox energy in a proton gradient. The protein is NADH-quinone oxidoreductase subunit N of Anoxybacillus flavithermus (strain DSM 21510 / WK1).